Consider the following 198-residue polypeptide: Probable molybdenum cofactor guanylyltransferase (198 aa).

Residues 9–11, lysine 22, aspartate 66, and aspartate 95 each bind GTP; that span reads LAG. Aspartate 95 provides a ligand contact to Mg(2+).

Belongs to the MobA family. The cofactor is Mg(2+).

It localises to the cytoplasm. It carries out the reaction Mo-molybdopterin + GTP + H(+) = Mo-molybdopterin guanine dinucleotide + diphosphate. Its function is as follows. Transfers a GMP moiety from GTP to Mo-molybdopterin (Mo-MPT) cofactor (Moco or molybdenum cofactor) to form Mo-molybdopterin guanine dinucleotide (Mo-MGD) cofactor. This Clostridium perfringens (strain 13 / Type A) protein is Probable molybdenum cofactor guanylyltransferase.